A 297-amino-acid chain; its full sequence is UDP-N-acetylenolpyruvoylglucosamine reductase (297 aa).

The region spanning 18–184 (QVGGPAEWYL…LSARLRLAPG (167 aa)) is the FAD-binding PCMH-type domain. Residue R163 is part of the active site. S214 acts as the Proton donor in catalysis. Residue E285 is part of the active site.

Requires FAD as cofactor.

It is found in the cytoplasm. The catalysed reaction is UDP-N-acetyl-alpha-D-muramate + NADP(+) = UDP-N-acetyl-3-O-(1-carboxyvinyl)-alpha-D-glucosamine + NADPH + H(+). Its pathway is cell wall biogenesis; peptidoglycan biosynthesis. In terms of biological role, cell wall formation. This is UDP-N-acetylenolpyruvoylglucosamine reductase from Gloeobacter violaceus (strain ATCC 29082 / PCC 7421).